The primary structure comprises 206 residues: Large ribosomal subunit protein eL13y (206 aa).

The interval 182–206 (LERTNKRHAGARAKRAADAEKEEKK) is disordered. The span at 186–195 (NKRHAGARAK) shows a compositional bias: basic residues. A compositionally biased stretch (basic and acidic residues) spans 196–206 (RAADAEKEEKK).

It belongs to the eukaryotic ribosomal protein eL13 family.

In Brassica napus (Rape), this protein is Large ribosomal subunit protein eL13y.